A 102-amino-acid polypeptide reads, in one-letter code: Large ribosomal subunit protein bL28 (102 aa).

A compositionally biased stretch (polar residues) spans 1–20 (MSNSCDLTGHGWQNGNMVSH). Residues 1-27 (MSNSCDLTGHGWQNGNMVSHSNRKTKK) form a disordered region.

This sequence belongs to the bacterial ribosomal protein bL28 family.

This Neorickettsia sennetsu (strain ATCC VR-367 / Miyayama) (Ehrlichia sennetsu) protein is Large ribosomal subunit protein bL28.